Reading from the N-terminus, the 161-residue chain is Phosphopantetheine adenylyltransferase (161 aa).

Ser-9 is a substrate binding site. ATP-binding positions include 9-10 (SF) and His-17. Positions 41, 73, and 87 each coordinate substrate. Residues 88 to 90 (GIR), Glu-98, and 123 to 129 (TGFISST) contribute to the ATP site.

The protein belongs to the bacterial CoaD family. In terms of assembly, homohexamer. The cofactor is Mg(2+).

The protein resides in the cytoplasm. It carries out the reaction (R)-4'-phosphopantetheine + ATP + H(+) = 3'-dephospho-CoA + diphosphate. The protein operates within cofactor biosynthesis; coenzyme A biosynthesis; CoA from (R)-pantothenate: step 4/5. Functionally, reversibly transfers an adenylyl group from ATP to 4'-phosphopantetheine, yielding dephospho-CoA (dPCoA) and pyrophosphate. This is Phosphopantetheine adenylyltransferase from Psychromonas ingrahamii (strain DSM 17664 / CCUG 51855 / 37).